The following is a 120-amino-acid chain: Large ribosomal subunit protein uL18 (120 aa).

Residues 1 to 26 form a disordered region; the sequence is MSKAKVTNARRKRSVRLKLRRSGGGR. The segment covering 8 to 23 has biased composition (basic residues); it reads NARRKRSVRLKLRRSG.

Belongs to the universal ribosomal protein uL18 family. As to quaternary structure, part of the 50S ribosomal subunit; part of the 5S rRNA/L5/L18/L25 subcomplex. Contacts the 5S and 23S rRNAs.

In terms of biological role, this is one of the proteins that bind and probably mediate the attachment of the 5S RNA into the large ribosomal subunit, where it forms part of the central protuberance. This Bradyrhizobium diazoefficiens (strain JCM 10833 / BCRC 13528 / IAM 13628 / NBRC 14792 / USDA 110) protein is Large ribosomal subunit protein uL18.